A 426-amino-acid chain; its full sequence is Serine--tRNA ligase (426 aa).

An L-serine-binding site is contributed by 233-235 (TAE). 264-266 (RSE) serves as a coordination point for ATP. E287 is a binding site for L-serine. ATP is bound at residue 351 to 354 (EISS). Position 387 (S387) interacts with L-serine.

This sequence belongs to the class-II aminoacyl-tRNA synthetase family. Type-1 seryl-tRNA synthetase subfamily. As to quaternary structure, homodimer. The tRNA molecule binds across the dimer.

The protein resides in the cytoplasm. It carries out the reaction tRNA(Ser) + L-serine + ATP = L-seryl-tRNA(Ser) + AMP + diphosphate + H(+). The enzyme catalyses tRNA(Sec) + L-serine + ATP = L-seryl-tRNA(Sec) + AMP + diphosphate + H(+). Its pathway is aminoacyl-tRNA biosynthesis; selenocysteinyl-tRNA(Sec) biosynthesis; L-seryl-tRNA(Sec) from L-serine and tRNA(Sec): step 1/1. Its function is as follows. Catalyzes the attachment of serine to tRNA(Ser). Is also able to aminoacylate tRNA(Sec) with serine, to form the misacylated tRNA L-seryl-tRNA(Sec), which will be further converted into selenocysteinyl-tRNA(Sec). This is Serine--tRNA ligase from Pseudomonas putida (strain ATCC 47054 / DSM 6125 / CFBP 8728 / NCIMB 11950 / KT2440).